Here is a 172-residue protein sequence, read N- to C-terminus: Large ribosomal subunit protein uL10 (172 aa).

Belongs to the universal ribosomal protein uL10 family. As to quaternary structure, part of the ribosomal stalk of the 50S ribosomal subunit. The N-terminus interacts with L11 and the large rRNA to form the base of the stalk. The C-terminus forms an elongated spine to which L12 dimers bind in a sequential fashion forming a multimeric L10(L12)X complex.

Forms part of the ribosomal stalk, playing a central role in the interaction of the ribosome with GTP-bound translation factors. This is Large ribosomal subunit protein uL10 from Bartonella henselae (strain ATCC 49882 / DSM 28221 / CCUG 30454 / Houston 1) (Rochalimaea henselae).